A 133-amino-acid polypeptide reads, in one-letter code: MKKNITKTIIASTVIAAGLLTQTNDAKAFFSYEWKGLEIAKNLADQAKKDDERIDKLMKESDKNLTPYKAETVNDLYLIVKKLSQGDVKKAVVRIKDDGPRDYYTFDLTRPLEENRKNIKVVKNGEIDSITWY.

Positions 1-28 (MKKNITKTIIASTVIAAGLLTQTNDAKA) are cleaved as a signal peptide.

Belongs to the CHIPS/FLIPr family.

The protein localises to the secreted. In terms of biological role, may be involved in countering the first line of host defense mechanisms. Impairs the leukocyte response to FPRL1 agonists by binding directly to host FPRL1. Exerts, in vitro, anti-inflammatory activity by inhibiting calcium mobilization and cell migration toward chemoattractants. This chain is FPRL1 inhibitory protein (flr), found in Staphylococcus aureus (strain Newman).